The primary structure comprises 357 residues: Pre-mRNA-splicing factor RBM22 homolog (357 aa).

A C3H1-type zinc finger spans residues 153 to 180 (RNMARVCSFWRKNSCNRGDECPYLHKEI). The 74-residue stretch at 222–295 (NKICIQGISE…CNLTVHLQDN (74 aa)) folds into the RRM domain.

The protein belongs to the SLT11 family. As to quaternary structure, probable component of the spliceosome C complex.

It localises to the nucleus. In terms of biological role, involved in pre-mRNA splicing. Binds RNA. This Plasmodium falciparum (isolate 3D7) protein is Pre-mRNA-splicing factor RBM22 homolog.